The following is a 128-amino-acid chain: Sulfurtransferase TusD (128 aa).

C78 functions as the Cysteine persulfide intermediate in the catalytic mechanism.

This sequence belongs to the DsrE/TusD family. As to quaternary structure, heterohexamer, formed by a dimer of trimers. The hexameric TusBCD complex contains 2 copies each of TusB, TusC and TusD. The TusBCD complex interacts with TusE.

It localises to the cytoplasm. Functionally, part of a sulfur-relay system required for 2-thiolation of 5-methylaminomethyl-2-thiouridine (mnm(5)s(2)U) at tRNA wobble positions. Accepts sulfur from TusA and transfers it in turn to TusE. The sequence is that of Sulfurtransferase TusD from Enterobacter sp. (strain 638).